The following is a 338-amino-acid chain: UDP-3-O-acylglucosamine N-acyltransferase (338 aa).

Catalysis depends on histidine 239, which acts as the Proton acceptor.

Belongs to the transferase hexapeptide repeat family. LpxD subfamily. As to quaternary structure, homotrimer.

The catalysed reaction is a UDP-3-O-[(3R)-3-hydroxyacyl]-alpha-D-glucosamine + a (3R)-hydroxyacyl-[ACP] = a UDP-2-N,3-O-bis[(3R)-3-hydroxyacyl]-alpha-D-glucosamine + holo-[ACP] + H(+). Its pathway is bacterial outer membrane biogenesis; LPS lipid A biosynthesis. Catalyzes the N-acylation of UDP-3-O-acylglucosamine using 3-hydroxyacyl-ACP as the acyl donor. Is involved in the biosynthesis of lipid A, a phosphorylated glycolipid that anchors the lipopolysaccharide to the outer membrane of the cell. In Thermosynechococcus vestitus (strain NIES-2133 / IAM M-273 / BP-1), this protein is UDP-3-O-acylglucosamine N-acyltransferase.